The following is a 140-amino-acid chain: Peptide methionine sulfoxide reductase MsrB (140 aa).

The MsrB domain maps to 10-132; it reads EEDWKSVLTP…NSVSLGFTKE (123 aa). The Zn(2+) site is built by C49, C52, C98, and C101. The active-site Nucleophile is the C121.

Belongs to the MsrB Met sulfoxide reductase family. It depends on Zn(2+) as a cofactor.

It carries out the reaction L-methionyl-[protein] + [thioredoxin]-disulfide + H2O = L-methionyl-(R)-S-oxide-[protein] + [thioredoxin]-dithiol. This Methanosarcina mazei (strain ATCC BAA-159 / DSM 3647 / Goe1 / Go1 / JCM 11833 / OCM 88) (Methanosarcina frisia) protein is Peptide methionine sulfoxide reductase MsrB.